A 276-amino-acid polypeptide reads, in one-letter code: BES1/BZR1 homolog protein 1 (276 aa).

3 disordered regions span residues 1 to 30 (MTASGGGSTAATGRMPTWKERENNKKRERR), 76 to 125 (TTYR…PTRF), and 155 to 191 (SAPVTPPISSPRRSNPRLPRWQSSNFPVSAPSSPTRR). Residues 14-87 (RMPTWKEREN…YRKGSRPTET (74 aa)) form a required for DNA-binding region. The segment covering 84-103 (PTETTVPCSSIQLSPQSSAF) has biased composition (polar residues). A compositionally biased stretch (low complexity) spans 104 to 122 (QSPIPSYQASPSSSSYPSP). Position 159 is a phosphothreonine (T159). The span at 164-174 (SPRRSNPRLPR) shows a compositional bias: low complexity. Polar residues predominate over residues 175–189 (WQSSNFPVSAPSSPT).

This sequence belongs to the BZR/LAT61 family. Phosphorylated. Phosphorylation increases protein degradation.

The chain is BES1/BZR1 homolog protein 1 (BEH1) from Arabidopsis thaliana (Mouse-ear cress).